A 989-amino-acid polypeptide reads, in one-letter code: Phosphoenolpyruvate carboxylase (989 aa).

Active-site residues include His175 and Lys630.

The protein belongs to the PEPCase type 1 family. Requires Mg(2+) as cofactor.

It carries out the reaction oxaloacetate + phosphate = phosphoenolpyruvate + hydrogencarbonate. In terms of biological role, forms oxaloacetate, a four-carbon dicarboxylic acid source for the tricarboxylic acid cycle. The polypeptide is Phosphoenolpyruvate carboxylase (Prochlorococcus marinus (strain MIT 9215)).